The following is a 918-amino-acid chain: Isoleucine--tRNA ligase 1 (918 aa).

Positions 57 to 67 (PYANGDIHIGH) match the 'HIGH' region motif. Glu-553 is an L-isoleucyl-5'-AMP binding site. Residues 594-598 (KMSKS) carry the 'KMSKS' region motif. Lys-597 contacts ATP. The Zn(2+) site is built by Cys-885, Cys-888, Cys-905, and Cys-908.

It belongs to the class-I aminoacyl-tRNA synthetase family. IleS type 1 subfamily. As to quaternary structure, monomer. Zn(2+) is required as a cofactor.

It localises to the cytoplasm. The catalysed reaction is tRNA(Ile) + L-isoleucine + ATP = L-isoleucyl-tRNA(Ile) + AMP + diphosphate. Catalyzes the attachment of isoleucine to tRNA(Ile). As IleRS can inadvertently accommodate and process structurally similar amino acids such as valine, to avoid such errors it has two additional distinct tRNA(Ile)-dependent editing activities. One activity is designated as 'pretransfer' editing and involves the hydrolysis of activated Val-AMP. The other activity is designated 'posttransfer' editing and involves deacylation of mischarged Val-tRNA(Ile). This Oceanobacillus iheyensis (strain DSM 14371 / CIP 107618 / JCM 11309 / KCTC 3954 / HTE831) protein is Isoleucine--tRNA ligase 1.